Reading from the N-terminus, the 283-residue chain is Glutamate racemase (283 aa).

Residues aspartate 28–serine 29 and tyrosine 60–glycine 61 each bind substrate. The active-site Proton donor/acceptor is the cysteine 92. Asparagine 93–serine 94 is a binding site for substrate. Cysteine 204 functions as the Proton donor/acceptor in the catalytic mechanism. Threonine 205 to histidine 206 serves as a coordination point for substrate.

Belongs to the aspartate/glutamate racemases family.

The catalysed reaction is L-glutamate = D-glutamate. It participates in cell wall biogenesis; peptidoglycan biosynthesis. Functionally, provides the (R)-glutamate required for cell wall biosynthesis. The protein is Glutamate racemase of Erwinia tasmaniensis (strain DSM 17950 / CFBP 7177 / CIP 109463 / NCPPB 4357 / Et1/99).